A 724-amino-acid polypeptide reads, in one-letter code: Ribosomal RNA large subunit methyltransferase K/L (724 aa).

One can recognise a THUMP domain in the interval 42 to 153 (DAQRLVLWSR…KGRATLSVDL (112 aa)).

Belongs to the methyltransferase superfamily. RlmKL family.

It is found in the cytoplasm. It catalyses the reaction guanosine(2445) in 23S rRNA + S-adenosyl-L-methionine = N(2)-methylguanosine(2445) in 23S rRNA + S-adenosyl-L-homocysteine + H(+). It carries out the reaction guanosine(2069) in 23S rRNA + S-adenosyl-L-methionine = N(2)-methylguanosine(2069) in 23S rRNA + S-adenosyl-L-homocysteine + H(+). Its function is as follows. Specifically methylates the guanine in position 2445 (m2G2445) and the guanine in position 2069 (m7G2069) of 23S rRNA. The sequence is that of Ribosomal RNA large subunit methyltransferase K/L from Xylella fastidiosa (strain 9a5c).